The primary structure comprises 216 residues: MKVELTAIEARVIGCLIEKEVTTPDQYPLSLNALTNASNQKSNREPVMALSESDVLDAVDALIERRLVSDESAFNSRVSKYQHRFCNTEFGDLKLSEQEKGIICCMLLRGAQTPGEIRTRTNRLATFHDVKEVEAVLEHLASEEKGPLVVKLPREAGKRESRYMHLFCGEVDVSAMAAAVPATSSSSVRIAQLEQEVAELREELDALKAQVESLLS.

It belongs to the UPF0502 family.

The polypeptide is UPF0502 protein VPA1223 (Vibrio parahaemolyticus serotype O3:K6 (strain RIMD 2210633)).